Consider the following 480-residue polypeptide: RuvB-like helicase 2 (480 aa).

76–83 (GPPSTGKT) serves as a coordination point for ATP.

It belongs to the RuvB family. May form heterododecamers with RVB1. Component of the SWR1 chromatin remodeling complex, the INO80 chromatin remodeling complex, and of the R2TP complex.

It localises to the nucleus. It catalyses the reaction ATP + H2O = ADP + phosphate + H(+). Functionally, DNA helicase which participates in several chromatin remodeling complexes, including the SWR1 and the INO80 complexes. The SWR1 complex mediates the ATP-dependent exchange of histone H2A for the H2A variant HZT1 leading to transcriptional regulation of selected genes by chromatin remodeling. The INO80 complex remodels chromatin by shifting nucleosomes and is involved in DNA repair. Also involved in pre-rRNA processing. In Debaryomyces hansenii (strain ATCC 36239 / CBS 767 / BCRC 21394 / JCM 1990 / NBRC 0083 / IGC 2968) (Yeast), this protein is RuvB-like helicase 2 (RVB2).